A 220-amino-acid chain; its full sequence is Cytidylate kinase (220 aa).

11 to 19 (GPTASGKGT) provides a ligand contact to ATP.

Belongs to the cytidylate kinase family. Type 1 subfamily.

It is found in the cytoplasm. It catalyses the reaction CMP + ATP = CDP + ADP. It carries out the reaction dCMP + ATP = dCDP + ADP. This chain is Cytidylate kinase, found in Polynucleobacter asymbioticus (strain DSM 18221 / CIP 109841 / QLW-P1DMWA-1) (Polynucleobacter necessarius subsp. asymbioticus).